Consider the following 140-residue polypeptide: Large ribosomal subunit protein uL3 (140 aa).

It belongs to the universal ribosomal protein uL3 family. In terms of assembly, part of the 50S ribosomal subunit. Forms a cluster with proteins L14 and L19.

Functionally, one of the primary rRNA binding proteins, it binds directly near the 3'-end of the 23S rRNA, where it nucleates assembly of the 50S subunit. The chain is Large ribosomal subunit protein uL3 (rplC) from Planobispora rosea.